Consider the following 160-residue polypeptide: Crossover junction endodeoxyribonuclease RuvC (160 aa).

Residues Asp9, Glu68, and Asp141 contribute to the active site. Asp9, Glu68, and Asp141 together coordinate Mg(2+).

This sequence belongs to the RuvC family. In terms of assembly, homodimer which binds Holliday junction (HJ) DNA. The HJ becomes 2-fold symmetrical on binding to RuvC with unstacked arms; it has a different conformation from HJ DNA in complex with RuvA. In the full resolvosome a probable DNA-RuvA(4)-RuvB(12)-RuvC(2) complex forms which resolves the HJ. Requires Mg(2+) as cofactor.

The protein localises to the cytoplasm. The enzyme catalyses Endonucleolytic cleavage at a junction such as a reciprocal single-stranded crossover between two homologous DNA duplexes (Holliday junction).. The RuvA-RuvB-RuvC complex processes Holliday junction (HJ) DNA during genetic recombination and DNA repair. Endonuclease that resolves HJ intermediates. Cleaves cruciform DNA by making single-stranded nicks across the HJ at symmetrical positions within the homologous arms, yielding a 5'-phosphate and a 3'-hydroxyl group; requires a central core of homology in the junction. The consensus cleavage sequence is 5'-(A/T)TT(C/G)-3'. Cleavage occurs on the 3'-side of the TT dinucleotide at the point of strand exchange. HJ branch migration catalyzed by RuvA-RuvB allows RuvC to scan DNA until it finds its consensus sequence, where it cleaves and resolves the cruciform DNA. The chain is Crossover junction endodeoxyribonuclease RuvC from Campylobacter jejuni subsp. jejuni serotype O:23/36 (strain 81-176).